The following is a 29-amino-acid chain: uncharacterized protein (29 aa).

Residues 8-28 (FALIVVLFILLIIVGTAFVGG) traverse the membrane as a helical segment.

The protein belongs to the SscA family.

The protein localises to the membrane. This is an uncharacterized protein from Bacillus subtilis (strain 168).